The sequence spans 223 residues: MSSQPSFVTIRGKAISLETQTESLLSKYSTFAQTTSSEQTGQEKKIDKQLEGILGQRQDVIDSLTQICDSNPAISASKLSQLHRHKEILQDHWKSFRNIRSSIQQERNRLNLLFSVKNDIANSTTDAPAPIGDADEYIQNETRRIDQSNNVVDRLISQAWETRSQFHSQSNVLNTANNKVLQTLQRIPGVNQLIMKINTRRKKNAFVLATITTLCILFLFFTW.

N-acetylserine is present on Ser-2. The Cytoplasmic segment spans residues Ser-2–Asn-204. Ser-164 carries the post-translational modification Phosphoserine. The chain crosses the membrane as a helical; Anchor for type IV membrane protein span at residues Ala-205 to Thr-222. Residue Trp-223 is a topological domain, vesicular.

This sequence belongs to the GOSR1 family. In terms of assembly, component of several multiprotein Golgi SNARE complexes. Identified in a Golgi SNARE complex consisting of t-SNARES SED5, YKT6, and the v-SNARE SFT1. Interacts with BET1. Interacts with BOS1. Interacts with SEC22. Interacts with PEP12. Interacts with self.

The protein localises to the golgi apparatus membrane. Its function is as follows. Involved in transport from the ER to the Golgi apparatus as well as in intra-Golgi transport. It belongs to a super-family of proteins called t-SNAREs or soluble NSF (N-ethylmaleimide-sensitive factor) attachment protein receptor. Rescues alpha-factor maturation defects. The chain is Golgi SNAP receptor complex member 1 (GOS1) from Saccharomyces cerevisiae (strain ATCC 204508 / S288c) (Baker's yeast).